Consider the following 305-residue polypeptide: UDP-3-O-acyl-N-acetylglucosamine deacetylase (305 aa).

Zn(2+)-binding residues include His79, His238, and Asp242. The Proton donor role is filled by His265.

It belongs to the LpxC family. Zn(2+) is required as a cofactor.

The enzyme catalyses a UDP-3-O-[(3R)-3-hydroxyacyl]-N-acetyl-alpha-D-glucosamine + H2O = a UDP-3-O-[(3R)-3-hydroxyacyl]-alpha-D-glucosamine + acetate. The protein operates within glycolipid biosynthesis; lipid IV(A) biosynthesis; lipid IV(A) from (3R)-3-hydroxytetradecanoyl-[acyl-carrier-protein] and UDP-N-acetyl-alpha-D-glucosamine: step 2/6. In terms of biological role, catalyzes the hydrolysis of UDP-3-O-myristoyl-N-acetylglucosamine to form UDP-3-O-myristoylglucosamine and acetate, the committed step in lipid A biosynthesis. The sequence is that of UDP-3-O-acyl-N-acetylglucosamine deacetylase from Haemophilus influenzae (strain PittGG).